Here is a 209-residue protein sequence, read N- to C-terminus: Redox-sensing transcriptional repressor Rex (209 aa).

Positions 16 to 55 form a DNA-binding region, H-T-H motif; sequence LYYRFIQNLSLSGKQRVSSAELSEAVKVDSATIRRDFSYF. 90-95 contacts NAD(+); that stretch reads GVGNLG.

It belongs to the transcriptional regulatory Rex family. As to quaternary structure, homodimer.

The protein resides in the cytoplasm. Its function is as follows. Modulates transcription in response to changes in cellular NADH/NAD(+) redox state. The chain is Redox-sensing transcriptional repressor Rex from Bacillus cereus (strain AH187).